Reading from the N-terminus, the 219-residue chain is Large ribosomal subunit protein uL1 (219 aa).

Belongs to the universal ribosomal protein uL1 family. As to quaternary structure, part of the 50S ribosomal subunit.

Its function is as follows. Probably involved in E site tRNA release. Binds directly to 23S rRNA. Protein L1 is also a translational repressor protein, it controls the translation of its operon by binding to its mRNA. This Methanocaldococcus jannaschii (strain ATCC 43067 / DSM 2661 / JAL-1 / JCM 10045 / NBRC 100440) (Methanococcus jannaschii) protein is Large ribosomal subunit protein uL1.